We begin with the raw amino-acid sequence, 238 residues long: ATP synthase subunit a (238 aa).

The next 5 helical transmembrane spans lie at 18–38, 76–96, 114–134, 166–186, and 193–213; these read LTLL…VFWA, YSLL…LGLF, NLAF…IEGI, SLAI…GLIV, and LYWW…SIFI.

This sequence belongs to the ATPase A chain family. In terms of assembly, F-type ATPases have 2 components, CF(1) - the catalytic core - and CF(0) - the membrane proton channel. CF(1) has five subunits: alpha(3), beta(3), gamma(1), delta(1), epsilon(1). CF(0) has three main subunits: a(1), b(2) and c(9-12). The alpha and beta chains form an alternating ring which encloses part of the gamma chain. CF(1) is attached to CF(0) by a central stalk formed by the gamma and epsilon chains, while a peripheral stalk is formed by the delta and b chains.

It localises to the cell membrane. Functionally, key component of the proton channel; it plays a direct role in the translocation of protons across the membrane. This chain is ATP synthase subunit a, found in Streptococcus equi subsp. zooepidemicus (strain H70).